The chain runs to 30 residues: Dermaseptin-S3 (30 aa).

It belongs to the frog skin active peptide (FSAP) family. Dermaseptin subfamily. As to quaternary structure, monomer and oligomer. Forms aggregates in aqueous environments. As to expression, expressed by the skin glands.

The protein localises to the secreted. Its function is as follows. Potent antimicrobial peptide with activity against bacteria and protozoa. Also has activity against fungi. Probably acts by disturbing membrane functions with its amphipathic structure. Binds to healthy erythrocytes (this binding is receptor independent), but has very weak hemolytic activity. Does not bind to P.falciparum infected erythrocytes, but accumulates within the parasite. Kills the parasite, but has no hemolytic activity on the host cell. This chain is Dermaseptin-S3, found in Phyllomedusa sauvagei (Sauvage's leaf frog).